The following is a 456-amino-acid chain: MLNNAMSVVILAAGKGTRMYSDLPKVLHTLAGKAMVQHVIDAANELGAAHVHLVYGHGGDLLKQALKDDNLNWVLQAEQLGTGHAMQQAAPFFADDEDILMLYGDVPLISVETLQRLRDAKPQGGIGLLTVKLDDPTGYGRITRENGKVTGIVEHKDATDEQRQIQEINTGILIANGADMKRWLAKLTNNNAQGEYYITDIIALAYQEGREIVAVHPQRLSEVEGVNNRLQLSRLERVYQSEQAEKLLLAGVMLRDPARFYLRGTLTHGRDVEIDTNVIIEGNVTLGHRVKIGTGCVIKNSVIGDDCEISPYTVVEDVNLAAACTIGPFARLRPGAELLEGAHVGNFVEMKKARLGKGSKAGHLTYLGDAEIGDNVNIGAGTITCNYDGANKFKTIIGDDVFVGSDTQLVAPVTVGKGATIAAGTTVTRNVGENALAISRVPQTQKEGWRRPVKKK.

Residues 1–229 form a pyrophosphorylase region; the sequence is MLNNAMSVVI…LSEVEGVNNR (229 aa). UDP-N-acetyl-alpha-D-glucosamine contacts are provided by residues 11–14, Lys-25, Gln-76, 81–82, 103–105, Gly-140, Glu-154, Asn-169, and Asn-227; these read LAAG, GT, and YGD. Asp-105 contacts Mg(2+). Asn-227 serves as a coordination point for Mg(2+). The linker stretch occupies residues 230-250; that stretch reads LQLSRLERVYQSEQAEKLLLA. An N-acetyltransferase region spans residues 251 to 456; that stretch reads GVMLRDPARF…EGWRRPVKKK (206 aa). Residues Arg-333 and Lys-351 each coordinate UDP-N-acetyl-alpha-D-glucosamine. The active-site Proton acceptor is His-363. 2 residues coordinate UDP-N-acetyl-alpha-D-glucosamine: Tyr-366 and Asn-377. Acetyl-CoA is bound by residues Ala-380, 386-387, Ser-405, Ala-423, and Arg-440; that span reads NY.

The protein in the N-terminal section; belongs to the N-acetylglucosamine-1-phosphate uridyltransferase family. In the C-terminal section; belongs to the transferase hexapeptide repeat family. As to quaternary structure, homotrimer. Requires Mg(2+) as cofactor.

It is found in the cytoplasm. It carries out the reaction alpha-D-glucosamine 1-phosphate + acetyl-CoA = N-acetyl-alpha-D-glucosamine 1-phosphate + CoA + H(+). It catalyses the reaction N-acetyl-alpha-D-glucosamine 1-phosphate + UTP + H(+) = UDP-N-acetyl-alpha-D-glucosamine + diphosphate. The protein operates within nucleotide-sugar biosynthesis; UDP-N-acetyl-alpha-D-glucosamine biosynthesis; N-acetyl-alpha-D-glucosamine 1-phosphate from alpha-D-glucosamine 6-phosphate (route II): step 2/2. It functions in the pathway nucleotide-sugar biosynthesis; UDP-N-acetyl-alpha-D-glucosamine biosynthesis; UDP-N-acetyl-alpha-D-glucosamine from N-acetyl-alpha-D-glucosamine 1-phosphate: step 1/1. It participates in bacterial outer membrane biogenesis; LPS lipid A biosynthesis. Its function is as follows. Catalyzes the last two sequential reactions in the de novo biosynthetic pathway for UDP-N-acetylglucosamine (UDP-GlcNAc). The C-terminal domain catalyzes the transfer of acetyl group from acetyl coenzyme A to glucosamine-1-phosphate (GlcN-1-P) to produce N-acetylglucosamine-1-phosphate (GlcNAc-1-P), which is converted into UDP-GlcNAc by the transfer of uridine 5-monophosphate (from uridine 5-triphosphate), a reaction catalyzed by the N-terminal domain. The protein is Bifunctional protein GlmU of Shigella boydii serotype 18 (strain CDC 3083-94 / BS512).